Reading from the N-terminus, the 482-residue chain is Dual specificity protein phosphatase 10 (482 aa).

The Rhodanese domain maps to 168 to 285 (PSQGPVIIDC…FKQNHENLCD (118 aa)). Residues 199–215 (KISRRRLQQGKITVLDL) form an interaction with MAP kinases region. One can recognise a Tyrosine-protein phosphatase domain in the interval 321-464 (ELTPILPFLF…LLEFEEDLNN (144 aa)). Cysteine 408 functions as the Phosphocysteine intermediate in the catalytic mechanism.

It belongs to the protein-tyrosine phosphatase family. Non-receptor class dual specificity subfamily. Monomer. Interacts with MAPK14. As to expression, expressed in keratinocytes (at protein level). Detected in brain.

It localises to the cytoplasm. The protein localises to the nucleus. It catalyses the reaction O-phospho-L-tyrosyl-[protein] + H2O = L-tyrosyl-[protein] + phosphate. It carries out the reaction O-phospho-L-seryl-[protein] + H2O = L-seryl-[protein] + phosphate. The enzyme catalyses O-phospho-L-threonyl-[protein] + H2O = L-threonyl-[protein] + phosphate. In terms of biological role, protein phosphatase involved in the inactivation of MAP kinases. Has a specificity for the MAPK11/MAPK12/MAPK13/MAPK14 subfamily. It preferably dephosphorylates p38. The polypeptide is Dual specificity protein phosphatase 10 (DUSP10) (Homo sapiens (Human)).